The chain runs to 251 residues: Guanine nucleotide-binding protein subunit gamma 3 (251 aa).

Gly residues predominate over residues 1 to 10 (MSAPSGGGEG). The tract at residues 1 to 44 (MSAPSGGGEGGGKESAAGGVSSSSLAPSSLPPPRPKSPPEYPDL) is disordered. The span at 14-28 (ESAAGGVSSSSLAPS) shows a compositional bias: low complexity. The span at 29–41 (SLPPPRPKSPPEY) shows a compositional bias: pro residues. The region spanning 46 to 126 (GKRREAARVQ…LSLVSFCCCC (81 aa)) is the G protein gamma domain. Position 248 is a cysteine methyl ester (Cys-248). The S-farnesyl cysteine moiety is linked to residue Cys-248. Positions 249-251 (LAF) are cleaved as a propeptide — removed in mature form.

G proteins are composed of 3 units, alpha, beta and gamma. In terms of tissue distribution, expressed in flowers and siliques.

In terms of biological role, guanine nucleotide-binding proteins (G proteins) are involved as a modulator or transducer in various transmembrane signaling systems. The beta and gamma chains are required for the GTPase activity, for replacement of GDP by GTP, and for G protein-effector interaction. The protein is Guanine nucleotide-binding protein subunit gamma 3 (GG3) of Arabidopsis thaliana (Mouse-ear cress).